We begin with the raw amino-acid sequence, 370 residues long: 2-Hydroxyacid oxidase 1 (370 aa).

In terms of domain architecture, FMN hydroxy acid dehydrogenase spans Met1–Leu365. Tyr26 contacts glyoxylate. FMN-binding positions include Ala79 to Ala81, Ser108, and Gln130. Tyr132 serves as a coordination point for glyoxylate. Residue Thr158 participates in FMN binding. Arg167 lines the glyoxylate pocket. Lys184 carries the N6-succinyllysine modification. 2 positions are modified to phosphoserine: Ser194 and Ser230. Positions 236 and 258 each coordinate FMN. Glyoxylate contacts are provided by His260 and Arg263. His260 (proton acceptor) is an active-site residue. FMN contacts are provided by residues Asp291–Arg295 and Gly314–Arg315. Residues Ser368–Ile370 carry the Microbody targeting signal motif.

It belongs to the FMN-dependent alpha-hydroxy acid dehydrogenase family. As to quaternary structure, homotetramer. Requires FMN as cofactor. As to expression, highly expressed in liver.

It is found in the peroxisome matrix. The catalysed reaction is a (2S)-2-hydroxycarboxylate + O2 = a 2-oxocarboxylate + H2O2. It catalyses the reaction glycolate + O2 = glyoxylate + H2O2. It carries out the reaction glyoxylate + O2 + H2O = oxalate + H2O2 + H(+). The enzyme catalyses 2-hydroxyhexadecanoate + O2 = 2-oxohexadecanoate + H2O2. The catalysed reaction is 2-hydroxyoctanoate + O2 = 2-oxooctanoate + H2O2. Its pathway is amino-acid biosynthesis; glycine biosynthesis. With respect to regulation, inhibited by its product oxalate. Inhibited by high concentrations of dichlorophenolindophenol (DCIP) in vitro. In terms of biological role, broad substrate specificity (S)-2-hydroxy-acid oxidase that preferentially oxidizes glycolate. The glyoxylate produced by the oxidation of glycolate can then be utilized by alanine-glyoxylate aminotransferase for the peroxisomal synthesis of glycine; this pathway appears to be an important step for the detoxification of glyoxylate which, if allowed to accumulate, may be metabolized to oxalate with formation of kidney stones. Can also catalyze the oxidation of glyoxylate, and long chain hydroxyacids such as 2-hydroxyhexadecanoate and 2-hydroxyoctanoate, albeit with much lower catalytic efficiency. Active in vitro with the artificial electron acceptor 2,6-dichlorophenolindophenol (DCIP), but O2 is believed to be the physiological electron acceptor, leading to the production of H2O2. Is not active on L-lactate and 2-hydroxybutanoate. The polypeptide is 2-Hydroxyacid oxidase 1 (Homo sapiens (Human)).